A 546-amino-acid polypeptide reads, in one-letter code: Chaperonin GroEL (546 aa).

ATP is bound by residues 30 to 33, Lys51, 87 to 91, Gly415, 479 to 481, and Asp495; these read TLGP, DGTTT, and NAA.

It belongs to the chaperonin (HSP60) family. As to quaternary structure, forms a cylinder of 14 subunits composed of two heptameric rings stacked back-to-back. Interacts with the co-chaperonin GroES.

It is found in the cytoplasm. The enzyme catalyses ATP + H2O + a folded polypeptide = ADP + phosphate + an unfolded polypeptide.. Its function is as follows. Together with its co-chaperonin GroES, plays an essential role in assisting protein folding. The GroEL-GroES system forms a nano-cage that allows encapsulation of the non-native substrate proteins and provides a physical environment optimized to promote and accelerate protein folding. The sequence is that of Chaperonin GroEL from Pseudomonas entomophila (strain L48).